Reading from the N-terminus, the 423-residue chain is Mannose-6-phosphate isomerase (423 aa).

An N-acetylalanine modification is found at Ala-2. Phosphoserine is present on residues Ser-102 and Ser-108. Zn(2+) contacts are provided by Gln-110, His-112, Glu-137, and His-276. The active site involves Arg-295.

Belongs to the mannose-6-phosphate isomerase type 1 family. It depends on Zn(2+) as a cofactor.

It is found in the cytoplasm. It carries out the reaction D-mannose 6-phosphate = D-fructose 6-phosphate. Its pathway is nucleotide-sugar biosynthesis; GDP-alpha-D-mannose biosynthesis; alpha-D-mannose 1-phosphate from D-fructose 6-phosphate: step 1/2. In terms of biological role, isomerase that catalyzes the interconversion of fructose-6-P and mannose-6-P and has a critical role in the supply of D-mannose derivatives required for many eukaryotic glycosylation reactions. This is Mannose-6-phosphate isomerase (MPI) from Bos taurus (Bovine).